A 248-amino-acid polypeptide reads, in one-letter code: Gamma-interferon-inducible lysosomal thiol reductase (248 aa).

Residues 1–26 (MSWSPILPFLSLLLLLFPLEVPRAAT) form the signal peptide. A propeptide spans 27 to 54 (ASLSQASSEGTTTCKAHDVCLLGPRPLP) (removed in mature form). A disulfide bridge connects residues cysteine 69 and cysteine 72. Asparagine 92 and asparagine 105 each carry an N-linked (GlcNAc...) asparagine glycan. Positions 231–248 (KPDICSSIADSPRKVCYK) are cleaved as a propeptide — removed in mature form.

It belongs to the GILT family. As to quaternary structure, dimer; disulfide-linked. N-glycosylated. Sugar chains contain mannose-6-phosphate. In terms of processing, synthesized as a 35 kDa precursor which is then processed into the mature 30 kDa form via cleavage of N-terminal and C-terminal propeptides. Processing of the precursor is mediated by multiple lysosomal proteases.

Its subcellular location is the secreted. It localises to the lysosome. In terms of biological role, lysosomal thiol reductase that can reduce protein disulfide bonds. May facilitate the complete unfolding of proteins destined for lysosomal degradation. Plays an important role in antigen processing. Facilitates the generation of MHC class II-restricted epitodes from disulfide bond-containing antigen by the endocytic reduction of disulfide bonds. Also facilitates MHC class I-restricted recognition of exogenous antigens containing disulfide bonds by CD8+ T-cells or crosspresentation. In Mus musculus (Mouse), this protein is Gamma-interferon-inducible lysosomal thiol reductase (Ifi30).